The sequence spans 293 residues: Ribonuclease HIII (293 aa).

Residues leucine 78–arginine 293 form the RNase H type-2 domain. Residues aspartate 84, glutamate 85, and aspartate 187 each coordinate a divalent metal cation.

It belongs to the RNase HII family. RnhC subfamily. The cofactor is Mn(2+). Mg(2+) serves as cofactor.

The protein resides in the cytoplasm. The catalysed reaction is Endonucleolytic cleavage to 5'-phosphomonoester.. Endonuclease that specifically degrades the RNA of RNA-DNA hybrids. The sequence is that of Ribonuclease HIII from Streptococcus pneumoniae (strain Taiwan19F-14).